Consider the following 82-residue polypeptide: U16-lycotoxin-Ls1a (82 aa).

The signal sequence occupies residues 1–22; sequence MSPKVQALLLLVGLITFLAVHA. A propeptide spanning residues 23–34 is cleaved from the precursor; the sequence is EEELSETVESER. Cystine bridges form between Cys36–Cys51, Cys43–Cys56, Cys50–Cys67, and Cys58–Cys65.

It belongs to the neurotoxin 02 (plectoxin) family. 04 (U16-lycotoxin) subfamily. Expressed by the venom gland.

The protein localises to the secreted. This is U16-lycotoxin-Ls1a from Lycosa singoriensis (Wolf spider).